The primary structure comprises 499 residues: Heparin cofactor 2 (499 aa).

Positions 1–19 (MKHSLNALLIFLIITSAWG) are cleaved as a signal peptide. The residue at position 37 (Ser37) is a Phosphoserine; by FAM20C. Asn49 is a glycosylation site (N-linked (GlcNAc...) (complex) asparagine). Residues 68 to 79 (DWIPEGEEDDDY) are chemotactic activity. Repeat copies occupy residues 73–83 (GEEDDDYLDLE) and 87–97 (SEDDDYIDIVD). Residues 73-97 (GEEDDDYLDLEKIFSEDDDYIDIVD) are 2 X 11 AA approximate repeats, Asp/Glu-rich (acidic) (hirudin-like). 2 positions are modified to sulfotyrosine: Tyr79 and Tyr92. A glycan (N-linked (GlcNAc...) asparagine) is linked at Asn188. Positions 192 to 212 (KYEITTIHNLFRKLTHRLFRR) are glycosaminoglycan-binding site. A glycan (N-linked (GlcNAc...) asparagine) is linked at Asn387.

Belongs to the serpin family. Phosphorylated by FAM20C in the extracellular medium. Expressed predominantly in liver. Also present in plasma. As to expression, expressed in plasma (at protein level). Expressed in liver.

Functionally, thrombin inhibitor activated by the glycosaminoglycans, heparin or dermatan sulfate. In the presence of the latter, HC-II becomes the predominant thrombin inhibitor in place of antithrombin III (AT-III). Also inhibits chymotrypsin, but in a glycosaminoglycan-independent manner. In terms of biological role, peptides at the N-terminal of HC-II have chemotactic activity for both monocytes and neutrophils. Its function is as follows. Shows negligible inhibition, in vitro, of thrombin and tPA and no inhibition of factor Xa, in vitro. The protein is Heparin cofactor 2 (SERPIND1) of Homo sapiens (Human).